We begin with the raw amino-acid sequence, 214 residues long: Exosome complex component RRP46 homolog (214 aa).

Belongs to the RNase PH family. In terms of assembly, homodimer. Component of the RNA exosome complex. Interacts with crn-4; interaction promotes the DNase activity of crn-4. Interacts with crn-3, cps-6 and cyn-13.

It localises to the cytoplasm. Its subcellular location is the nucleus. Its function is as follows. Non-catalytic component of the RNA exosome complex which has 3'-&gt;5' exoribonuclease activity and participates in a multitude of cellular RNA processing and degradation events. Involved in apoptotic DNA degradation. In vitro, does not bind or digest single-stranded RNA. In vitro, binds to double-stranded DNA without detectable DNase activity. This Caenorhabditis elegans protein is Exosome complex component RRP46 homolog.